A 343-amino-acid polypeptide reads, in one-letter code: Isopentenyl-diphosphate delta-isomerase (343 aa).

9–10 lines the substrate pocket; that stretch reads RK. FMN contacts are provided by residues S67, 68–70, S98, and N127; that span reads AMT. 98 to 100 is a binding site for substrate; the sequence is SQR. Q162 is a binding site for substrate. E163 provides a ligand contact to Mg(2+). FMN is bound by residues K194, T224, 273–275, and 294–295; these read GVR and AA.

Belongs to the IPP isomerase type 2 family. In terms of assembly, homooctamer. Dimer of tetramers. The cofactor is FMN. Requires NADPH as cofactor. Mg(2+) serves as cofactor.

It localises to the cytoplasm. It catalyses the reaction isopentenyl diphosphate = dimethylallyl diphosphate. In terms of biological role, involved in the biosynthesis of isoprenoids. Catalyzes the 1,3-allylic rearrangement of the homoallylic substrate isopentenyl (IPP) to its allylic isomer, dimethylallyl diphosphate (DMAPP). In Xanthobacter autotrophicus (strain ATCC BAA-1158 / Py2), this protein is Isopentenyl-diphosphate delta-isomerase.